The primary structure comprises 439 residues: Glutamine synthetase (439 aa).

One can recognise a GS beta-grasp domain in the interval 12–93 (RSPKFVQLIF…VYGYIYKDGK (82 aa)). The GS catalytic domain occupies 99–439 (PRGVLKRVIE…EWELERYFFI (341 aa)). Glutamate 122 and glutamate 124 together coordinate Mg(2+). ATP is bound at residue glutamate 172. Residues glutamate 177 and glutamate 184 each coordinate Mg(2+). Glycine 229 contacts L-glutamate. Histidine 233 is a binding site for Mg(2+). ATP-binding positions include 235 to 237 (HIS) and serine 237. 3 residues coordinate L-glutamate: arginine 283, glutamate 289, and arginine 301. ATP-binding residues include arginine 301 and arginine 306. Glutamate 318 lines the Mg(2+) pocket. An L-glutamate-binding site is contributed by arginine 320.

This sequence belongs to the glutamine synthetase family. Oligomer of 12 subunits arranged in the form of two hexagons. Mg(2+) is required as a cofactor.

It localises to the cytoplasm. It catalyses the reaction L-glutamate + NH4(+) + ATP = L-glutamine + ADP + phosphate + H(+). In terms of biological role, probably involved in nitrogen metabolism via ammonium assimilation. Catalyzes the ATP-dependent biosynthesis of glutamine from glutamate and ammonia. The polypeptide is Glutamine synthetase (Pyrococcus abyssi (strain GE5 / Orsay)).